The sequence spans 493 residues: Probable malate:quinone oxidoreductase (493 aa).

It belongs to the MQO family. It depends on FAD as a cofactor.

It catalyses the reaction (S)-malate + a quinone = a quinol + oxaloacetate. It functions in the pathway carbohydrate metabolism; tricarboxylic acid cycle; oxaloacetate from (S)-malate (quinone route): step 1/1. In Lysinibacillus sphaericus (strain C3-41), this protein is Probable malate:quinone oxidoreductase.